A 557-amino-acid polypeptide reads, in one-letter code: 2-succinyl-5-enolpyruvyl-6-hydroxy-3-cyclohexene-1-carboxylate synthase (557 aa).

The protein belongs to the TPP enzyme family. MenD subfamily. In terms of assembly, homodimer. It depends on Mg(2+) as a cofactor. The cofactor is Mn(2+). Thiamine diphosphate serves as cofactor.

The enzyme catalyses isochorismate + 2-oxoglutarate + H(+) = 5-enolpyruvoyl-6-hydroxy-2-succinyl-cyclohex-3-ene-1-carboxylate + CO2. It participates in quinol/quinone metabolism; 1,4-dihydroxy-2-naphthoate biosynthesis; 1,4-dihydroxy-2-naphthoate from chorismate: step 2/7. The protein operates within quinol/quinone metabolism; menaquinone biosynthesis. Catalyzes the thiamine diphosphate-dependent decarboxylation of 2-oxoglutarate and the subsequent addition of the resulting succinic semialdehyde-thiamine pyrophosphate anion to isochorismate to yield 2-succinyl-5-enolpyruvyl-6-hydroxy-3-cyclohexene-1-carboxylate (SEPHCHC). This is 2-succinyl-5-enolpyruvyl-6-hydroxy-3-cyclohexene-1-carboxylate synthase from Staphylococcus aureus (strain USA300).